The sequence spans 295 residues: Carbapenem-hydrolyzing beta-lactamase transcriptional activator (295 aa).

The HTH lysR-type domain maps to 5–62; sequence LPLNALRAFEASARYLNFTKAGLELHVSQAAVSQQVRTLEQMLGVALFTRVPRGLQLT. Positions 22–41 form a DNA-binding region, H-T-H motif; it reads FTKAGLELHVSQAAVSQQVR.

The protein belongs to the LysR transcriptional regulatory family.

In terms of biological role, this protein is a positive regulator of gene expression of carbapenem-hydrolyzing beta-lactamase (NmcA). The polypeptide is Carbapenem-hydrolyzing beta-lactamase transcriptional activator (nmcR) (Enterobacter cloacae).